The following is a 221-amino-acid chain: NAD(P)H-hydrate epimerase (221 aa).

A YjeF N-terminal domain is found at 10–211 (MQQYDQYTIN…DIGIYSPAEL (202 aa)). 58 to 62 (NNGGD) lines the (6S)-NADPHX pocket. Positions 59 and 121 each coordinate K(+). (6S)-NADPHX is bound by residues 125–131 (GIGLSKP) and aspartate 154. Residue serine 157 participates in K(+) binding.

This sequence belongs to the NnrE/AIBP family. It depends on K(+) as a cofactor.

The catalysed reaction is (6R)-NADHX = (6S)-NADHX. It catalyses the reaction (6R)-NADPHX = (6S)-NADPHX. In terms of biological role, catalyzes the epimerization of the S- and R-forms of NAD(P)HX, a damaged form of NAD(P)H that is a result of enzymatic or heat-dependent hydration. This is a prerequisite for the S-specific NAD(P)H-hydrate dehydratase to allow the repair of both epimers of NAD(P)HX. This is NAD(P)H-hydrate epimerase from Weissella koreensis (strain KACC 15510).